The primary structure comprises 352 residues: Ion-translocating oxidoreductase complex subunit D (352 aa).

A run of 5 helical transmembrane segments spans residues 20 to 40, 42 to 62, 78 to 109, 123 to 143, and 148 to 168; these read IMLL…WFFG, GTLV…ALVL, ALLT…VIIA, PAMI…TSWL, and IAVN…GHTA. Thr187 carries the FMN phosphoryl threonine modification. Transmembrane regions (helical) follow at residues 214–234, 242–262, 267–287, 301–321, and 322–342; these read ILAG…GLWL, WHIP…GWLF, LAAP…FFIL, LIFG…GGYP, and DGVA…DYYT.

The protein belongs to the NqrB/RnfD family. The complex is composed of six subunits: RsxA, RsxB, RsxC, RsxD, RsxE and RsxG. FMN is required as a cofactor.

The protein localises to the cell inner membrane. Functionally, part of a membrane-bound complex that couples electron transfer with translocation of ions across the membrane. Required to maintain the reduced state of SoxR. The sequence is that of Ion-translocating oxidoreductase complex subunit D from Escherichia coli (strain SE11).